The sequence spans 612 residues: tRNA 5-methylaminomethyl-2-thiouridine biosynthesis bifunctional protein MnmC (612 aa).

Residues 1-218 (MITFRGDGLY…KREILEASLE (218 aa)) are tRNA (mnm(5)s(2)U34)-methyltransferase. Residues 244 to 612 (IGAGVAGLAA…VRKLKRGLVR (369 aa)) are FAD-dependent cmnm(5)s(2)U34 oxidoreductase.

It in the N-terminal section; belongs to the methyltransferase superfamily. tRNA (mnm(5)s(2)U34)-methyltransferase family. This sequence in the C-terminal section; belongs to the DAO family. FAD serves as cofactor.

It is found in the cytoplasm. The enzyme catalyses 5-aminomethyl-2-thiouridine(34) in tRNA + S-adenosyl-L-methionine = 5-methylaminomethyl-2-thiouridine(34) in tRNA + S-adenosyl-L-homocysteine + H(+). Functionally, catalyzes the last two steps in the biosynthesis of 5-methylaminomethyl-2-thiouridine (mnm(5)s(2)U) at the wobble position (U34) in tRNA. Catalyzes the FAD-dependent demodification of cmnm(5)s(2)U34 to nm(5)s(2)U34, followed by the transfer of a methyl group from S-adenosyl-L-methionine to nm(5)s(2)U34, to form mnm(5)s(2)U34. The polypeptide is tRNA 5-methylaminomethyl-2-thiouridine biosynthesis bifunctional protein MnmC (Campylobacter fetus subsp. fetus (strain 82-40)).